Reading from the N-terminus, the 417-residue chain is Phosphoglycerate kinase (417 aa).

(2R)-3-phosphoglycerate contacts are provided by Val-23, Asp-24, Phe-25, Asn-26, Gln-38, Arg-39, Ser-62, His-63, Gly-65, Arg-66, Leu-122, Arg-123, His-170, and Arg-171. Residue Gly-214 participates in ADP binding. Gly-214 is a binding site for CDP. AMP contacts are provided by Ala-215 and Lys-216. Ala-215 provides a ligand contact to ATP. Ala-215 provides a ligand contact to Mg(2+). Asp-219 serves as a coordination point for CDP. A Mg(2+)-binding site is contributed by Asp-219. Lys-220 is an AMP binding site. ATP is bound at residue Lys-220. Residue Gly-238 participates in ADP binding. A CDP-binding site is contributed by Gly-238. AMP-binding residues include Gly-239 and Gly-313. ATP-binding residues include Gly-239 and Gly-313. Positions 338, 340, and 343 each coordinate CDP. Residue Phe-343 coordinates ADP. Glu-344 lines the AMP pocket. 3 residues coordinate ATP: Glu-344, Asp-375, and Thr-376. Residue Asp-375 participates in Mg(2+) binding.

The protein belongs to the phosphoglycerate kinase family. Monomer. Requires Mg(2+) as cofactor.

The protein resides in the cytoplasm. It carries out the reaction (2R)-3-phosphoglycerate + ATP = (2R)-3-phospho-glyceroyl phosphate + ADP. It functions in the pathway carbohydrate degradation; glycolysis; pyruvate from D-glyceraldehyde 3-phosphate: step 2/5. Catalyzes one of the two ATP producing reactions in the glycolytic pathway via the reversible conversion of 1,3-diphosphoglycerate to 3-phosphoglycerate. In addition to its role as a glycolytic enzyme, it seems that PGK-1 acts as a polymerase alpha cofactor protein (primer recognition protein). May play a role in sperm motility. This chain is Phosphoglycerate kinase (PGK), found in Gallus gallus (Chicken).